We begin with the raw amino-acid sequence, 185 residues long: Ribosome-recycling factor (185 aa).

Belongs to the RRF family.

The protein localises to the cytoplasm. Its function is as follows. Responsible for the release of ribosomes from messenger RNA at the termination of protein biosynthesis. May increase the efficiency of translation by recycling ribosomes from one round of translation to another. The sequence is that of Ribosome-recycling factor from Shewanella baltica (strain OS185).